The primary structure comprises 544 residues: CTP synthase (544 aa).

Residues 1–267 are amidoligase domain; it reads MSKFVFVTGG…GDLLVSRLHL (267 aa). Ser13 serves as a coordination point for CTP. UTP is bound at residue Ser13. 14–19 provides a ligand contact to ATP; the sequence is SVGKGI. Residue Tyr54 coordinates L-glutamine. Asp71 contacts ATP. Residues Asp71 and Glu141 each contribute to the Mg(2+) site. CTP is bound by residues 148-150, 188-193, and Lys224; these read DIE and KTKPTQ. Residues 188-193 and Lys224 contribute to the UTP site; that span reads KTKPTQ. The 236-residue stretch at 299-534 folds into the Glutamine amidotransferase type-1 domain; sequence YVELKDAYYS…INAAKKVIRD (236 aa). Gly354 contacts L-glutamine. Cys381 acts as the Nucleophile; for glutamine hydrolysis in catalysis. L-glutamine-binding positions include 382–385, Glu405, and Arg462; that span reads LGMQ. Residues His507 and Glu509 contribute to the active site.

The protein belongs to the CTP synthase family. As to quaternary structure, homotetramer.

The catalysed reaction is UTP + L-glutamine + ATP + H2O = CTP + L-glutamate + ADP + phosphate + 2 H(+). The enzyme catalyses L-glutamine + H2O = L-glutamate + NH4(+). It catalyses the reaction UTP + NH4(+) + ATP = CTP + ADP + phosphate + 2 H(+). It participates in pyrimidine metabolism; CTP biosynthesis via de novo pathway; CTP from UDP: step 2/2. Allosterically activated by GTP, when glutamine is the substrate; GTP has no effect on the reaction when ammonia is the substrate. The allosteric effector GTP functions by stabilizing the protein conformation that binds the tetrahedral intermediate(s) formed during glutamine hydrolysis. Inhibited by the product CTP, via allosteric rather than competitive inhibition. Catalyzes the ATP-dependent amination of UTP to CTP with either L-glutamine or ammonia as the source of nitrogen. Regulates intracellular CTP levels through interactions with the four ribonucleotide triphosphates. In Dehalococcoides mccartyi (strain ATCC BAA-2266 / KCTC 15142 / 195) (Dehalococcoides ethenogenes (strain 195)), this protein is CTP synthase.